The sequence spans 488 residues: Katanin p60 ATPase-containing subunit A-like 1 (488 aa).

At methionine 1 the chain carries N-acetylmethionine. Residues 128-179 (GAGARGLVGRAHQISKSDKAASRDKDYRARGRDDKARKNMQDGASDGEIPKF) are disordered. Residues 142-167 (SKSDKAASRDKDYRARGRDDKARKNM) are compositionally biased toward basic and acidic residues. Position 172 is a phosphoserine (serine 172). 246–253 (GPPGTGKT) is a binding site for ATP.

This sequence belongs to the AAA ATPase family. Katanin p60 subunit A1 subfamily. A-like 1 sub-subfamily. As to quaternary structure, interacts with KATNB1 and KATNBL1.

It is found in the cytoplasm. Its subcellular location is the cytoskeleton. It localises to the spindle pole. The protein localises to the spindle. It carries out the reaction n ATP + n H2O + a microtubule = n ADP + n phosphate + (n+1) alpha/beta tubulin heterodimers.. In terms of biological role, regulates microtubule dynamics in Sertoli cells, a process that is essential for spermiogenesis and male fertility. Severs microtubules in an ATP-dependent manner, promoting rapid reorganization of cellular microtubule arrays. Has microtubule-severing activity in vitro. In Rattus norvegicus (Rat), this protein is Katanin p60 ATPase-containing subunit A-like 1 (Katnal1).